Reading from the N-terminus, the 207-residue chain is Peptidyl-tRNA hydrolase (207 aa).

Tyrosine 30 contributes to the tRNA binding site. The active-site Proton acceptor is histidine 35. Tyrosine 81, asparagine 83, and asparagine 129 together coordinate tRNA.

This sequence belongs to the PTH family. In terms of assembly, monomer.

It localises to the cytoplasm. It carries out the reaction an N-acyl-L-alpha-aminoacyl-tRNA + H2O = an N-acyl-L-amino acid + a tRNA + H(+). Functionally, hydrolyzes ribosome-free peptidyl-tRNAs (with 1 or more amino acids incorporated), which drop off the ribosome during protein synthesis, or as a result of ribosome stalling. Catalyzes the release of premature peptidyl moieties from peptidyl-tRNA molecules trapped in stalled 50S ribosomal subunits, and thus maintains levels of free tRNAs and 50S ribosomes. The polypeptide is Peptidyl-tRNA hydrolase (Bordetella avium (strain 197N)).